The following is a 197-amino-acid chain: Protein-S-isoprenylcysteine O-methyltransferase A (197 aa).

The next 3 helical transmembrane spans lie at 16–36 (MLLSLIFFHISEYILAITIHG), 52–72 (ALAMLLSLLEYLTEIILFPGL), and 81–101 (FGLIMIIVGEIIRKAAIITAG). Residues 116–119 (HGLV), tyrosine 124, and 129–132 (HPSY) each bind S-adenosyl-L-methionine. Residues 140-160 (VGTQVMLCNPVSAVAFAVVVW) traverse the membrane as a helical segment. Substrate is bound at residue arginine 166. Position 170 (glutamate 170) interacts with S-adenosyl-L-methionine.

The protein belongs to the class VI-like SAM-binding methyltransferase superfamily. Isoprenylcysteine carboxyl methyltransferase family. It depends on Zn(2+) as a cofactor. In terms of tissue distribution, expressed primarily in flowers, stems, leaves and roots. Almost not expressed in siliques. Detected in root tips and vascular tissues of roots, cotyledons, petiols, hypocotyls, filaments, pollen grains and the distal and proximal portions of the gynoecium.

The protein localises to the endoplasmic reticulum membrane. It carries out the reaction [protein]-C-terminal S-[(2E,6E)-farnesyl]-L-cysteine + S-adenosyl-L-methionine = [protein]-C-terminal S-[(2E,6E)-farnesyl]-L-cysteine methyl ester + S-adenosyl-L-homocysteine. Inhibited by farnesylthioacetic acid (FTAA) and N-acetyl-S-trans, trans-farnesyl-l-cysteine (AFC). Catalyzes the post-translational methylation of isoprenylated C-terminal cysteine residues, resulting in the modulation of the function of prenylated proteins. Involved in negative regulation of abscisic acid signaling. Carboxyl methylation is a reversible and potentially regulated step in the post-translational modification of prenylated proteins. The polypeptide is Protein-S-isoprenylcysteine O-methyltransferase A (Arabidopsis thaliana (Mouse-ear cress)).